The chain runs to 133 residues: ATP synthase epsilon chain (133 aa).

The protein belongs to the ATPase epsilon chain family. In terms of assembly, F-type ATPases have 2 components, CF(1) - the catalytic core - and CF(0) - the membrane proton channel. CF(1) has five subunits: alpha(3), beta(3), gamma(1), delta(1), epsilon(1). CF(0) has three main subunits: a, b and c.

The protein resides in the cell membrane. Its function is as follows. Produces ATP from ADP in the presence of a proton gradient across the membrane. The protein is ATP synthase epsilon chain of Bacillus cytotoxicus (strain DSM 22905 / CIP 110041 / 391-98 / NVH 391-98).